Consider the following 520-residue polypeptide: GMP synthase [glutamine-hydrolyzing] (520 aa).

The Glutamine amidotransferase type-1 domain maps to 9–202 (TVLIVDFGSQ…IHNIAGIKGD (194 aa)). The active-site Nucleophile is the C86. Catalysis depends on residues H176 and E178. One can recognise a GMPS ATP-PPase domain in the interval 203–395 (WSMSAYRAKA…LGLPDSFIGR (193 aa)). 230-236 (SGGVDSS) is an ATP binding site.

In terms of assembly, homodimer.

The enzyme catalyses XMP + L-glutamine + ATP + H2O = GMP + L-glutamate + AMP + diphosphate + 2 H(+). It functions in the pathway purine metabolism; GMP biosynthesis; GMP from XMP (L-Gln route): step 1/1. Its function is as follows. Catalyzes the synthesis of GMP from XMP. The sequence is that of GMP synthase [glutamine-hydrolyzing] from Rhizobium rhizogenes (strain K84 / ATCC BAA-868) (Agrobacterium radiobacter).